Here is a 298-residue protein sequence, read N- to C-terminus: Ethanolamine ammonia-lyase small subunit (298 aa).

Adenosylcob(III)alamin contacts are provided by Val210, Glu231, and Cys261.

This sequence belongs to the EutC family. As to quaternary structure, the basic unit is a heterodimer which dimerizes to form tetramers. The heterotetramers trimerize; 6 large subunits form a core ring with 6 small subunits projecting outwards. Requires adenosylcob(III)alamin as cofactor.

Its subcellular location is the bacterial microcompartment. The catalysed reaction is ethanolamine = acetaldehyde + NH4(+). Its pathway is amine and polyamine degradation; ethanolamine degradation. In terms of biological role, catalyzes the deamination of various vicinal amino-alcohols to oxo compounds. Allows this organism to utilize ethanolamine as the sole source of nitrogen and carbon in the presence of external vitamin B12. The chain is Ethanolamine ammonia-lyase small subunit from Salmonella typhi.